A 353-amino-acid polypeptide reads, in one-letter code: Immune-associated nucleotide-binding protein 8 (353 aa).

Polar residues predominate over residues 1–10 (MANDQKNSES). The disordered stretch occupies residues 1–43 (MANDQKNSESFPAKEDHKKDDAAAPAEVDHKDEFSASQPHPVE). A compositionally biased stretch (basic and acidic residues) spans 12-34 (PAKEDHKKDDAAAPAEVDHKDEF). Positions 40–248 (HPVENIVLVG…YTDEMYHMIK (209 aa)) constitute an AIG1-type G domain. Residues 49 to 56 (GRTGNGKS) form a G1 region. GTP is bound by residues 49-57 (GRTGNGKSA) and Ser-70. The segment at 76-80 (GVTME) is G2. The segment at 98–101 (DTPG) is G3. The G4 stretch occupies residues 168-171 (TGGD). A G5 region spans residues 207–209 (DNK). GTP is bound at residue Asn-208. Residues 244 to 291 (YHMIKEENERHKKEQEELESKGHSEEQLAALMKELQIMNERNLKAMAE) are a coiled coil.

The protein belongs to the TRAFAC class TrmE-Era-EngA-EngB-Septin-like GTPase superfamily. AIG1/Toc34/Toc159-like paraseptin GTPase family. IAN subfamily. In terms of tissue distribution, mainly expressed in leaves.

The sequence is that of Immune-associated nucleotide-binding protein 8 from Arabidopsis thaliana (Mouse-ear cress).